Consider the following 303-residue polypeptide: Glycine--tRNA ligase alpha subunit (303 aa).

The protein belongs to the class-II aminoacyl-tRNA synthetase family. In terms of assembly, tetramer of two alpha and two beta subunits.

It localises to the cytoplasm. It carries out the reaction tRNA(Gly) + glycine + ATP = glycyl-tRNA(Gly) + AMP + diphosphate. This chain is Glycine--tRNA ligase alpha subunit, found in Methylobacterium radiotolerans (strain ATCC 27329 / DSM 1819 / JCM 2831 / NBRC 15690 / NCIMB 10815 / 0-1).